We begin with the raw amino-acid sequence, 375 residues long: ATP-sensitive inward rectifier potassium channel 15 (375 aa).

Residues 1-60 (MDAIHIGMSSTPLVKHTAGAGLKANRPRVMSKSGHSNVRIDKVDGIYLLYLQDLWTTVID) lie on the Cytoplasmic side of the membrane. Residues 61–87 (MKWRYKLTLFAATFVMTWFLFGVIYYA) form a helical membrane-spanning segment. The Extracellular segment spans residues 88-113 (IAFIHGDLEPGEPISNHTPCIMKVDS). Positions 114–130 (LTGAFLFSLESQTTIGY) form an intramembrane region, helical; Pore-forming. The short motif at 127–132 (TIGYGV) is the Selectivity filter element. At 131-139 (GVRSITEEC) the chain is on the extracellular side. The chain crosses the membrane as a helical span at residues 140–165 (PHAIFLLVAQLVITTLIEIFITGTFL). The Cytoplasmic segment spans residues 166–375 (AKIARPKKRA…RTLLLQQSNV (210 aa)).

Belongs to the inward rectifier-type potassium channel (TC 1.A.2.1) family. KCNJ15 subfamily. In terms of assembly, can form heteromultimeric channels with Kir5.1/KCNJ16. Interacts with PATJ.

It is found in the membrane. The protein resides in the cell membrane. It catalyses the reaction K(+)(in) = K(+)(out). Channel activity is regulated by variations of cytosolic pH; reversibly inhibited by acidic pH values. Inhibited by Ba(2+) and Cs(+) in a voltage-dependent manner. Its function is as follows. Inward rectifier potassium channels are characterized by a greater tendency to allow potassium to flow into the cell rather than out of it. Their voltage dependence is regulated by the concentration of extracellular potassium; as external potassium is raised, the voltage range of the channel opening shifts to more positive voltages. The inward rectification is mainly due to the blockage of outward current by internal magnesium. The chain is ATP-sensitive inward rectifier potassium channel 15 (KCNJ15) from Homo sapiens (Human).